A 142-amino-acid chain; its full sequence is ATP synthase epsilon chain (142 aa).

The protein belongs to the ATPase epsilon chain family. As to quaternary structure, F-type ATPases have 2 components, CF(1) - the catalytic core - and CF(0) - the membrane proton channel. CF(1) has five subunits: alpha(3), beta(3), gamma(1), delta(1), epsilon(1). CF(0) has three main subunits: a, b and c.

It localises to the cell inner membrane. Its function is as follows. Produces ATP from ADP in the presence of a proton gradient across the membrane. The chain is ATP synthase epsilon chain from Shewanella sp. (strain ANA-3).